Consider the following 175-residue polypeptide: COMPASS component SDC1 (175 aa).

Positions 1–12 are enriched in polar residues; that stretch reads MNESENSPQHNE. Residues 1 to 45 form a disordered region; the sequence is MNESENSPQHNEVTVPMVEDTSSNADIPMEQIQREDNKNYDKHDN. A compositionally biased stretch (basic and acidic residues) spans 32-45; sequence IQREDNKNYDKHDN. The tract at residues 121–162 is DPY-30; sequence QTRKYLNTNVTPHLLAGMRLIAVQQPEDPLRVLGEYLIEQSN.

It belongs to the dpy-30 family. Component of the Set1C/COMPASS complex which consists of SET1(2), BRE2(2), SPP1(2), SDC1(1), SHG1(1), SWD1(1), SWD2(1), and SWD3(1). Interacts directly with BRE2.

The protein resides in the nucleus. Its function is as follows. Component of the Set1C/COMPASS complex that specifically mono-, di- and trimethylates histone H3 to form H3K4me1/2/3, which subsequently plays a role in telomere length maintenance and transcription elongation regulation. COMPASS recognizes ubiquitinated H2B on one face of the nucleosome which stimulates the methylation of H3 on the opposing face. The sequence is that of COMPASS component SDC1 from Saccharomyces cerevisiae (strain ATCC 204508 / S288c) (Baker's yeast).